The chain runs to 600 residues: NADH-quinone oxidoreductase subunit C/D (600 aa).

The segment at M1–Q190 is NADH dehydrogenase I subunit C. Positions D214–R600 are NADH dehydrogenase I subunit D.

This sequence in the N-terminal section; belongs to the complex I 30 kDa subunit family. In the C-terminal section; belongs to the complex I 49 kDa subunit family. In terms of assembly, NDH-1 is composed of 13 different subunits. Subunits NuoB, CD, E, F, and G constitute the peripheral sector of the complex.

The protein resides in the cell inner membrane. The enzyme catalyses a quinone + NADH + 5 H(+)(in) = a quinol + NAD(+) + 4 H(+)(out). Functionally, NDH-1 shuttles electrons from NADH, via FMN and iron-sulfur (Fe-S) centers, to quinones in the respiratory chain. The immediate electron acceptor for the enzyme in this species is believed to be ubiquinone. Couples the redox reaction to proton translocation (for every two electrons transferred, four hydrogen ions are translocated across the cytoplasmic membrane), and thus conserves the redox energy in a proton gradient. The chain is NADH-quinone oxidoreductase subunit C/D from Escherichia coli (strain ATCC 8739 / DSM 1576 / NBRC 3972 / NCIMB 8545 / WDCM 00012 / Crooks).